Reading from the N-terminus, the 241-residue chain is 1-(5-phosphoribosyl)-5-[(5-phosphoribosylamino)methylideneamino] imidazole-4-carboxamide isomerase (241 aa).

Asp10 serves as the catalytic Proton acceptor. The active-site Proton donor is the Asp129.

The protein belongs to the HisA/HisF family.

It is found in the cytoplasm. It carries out the reaction 1-(5-phospho-beta-D-ribosyl)-5-[(5-phospho-beta-D-ribosylamino)methylideneamino]imidazole-4-carboxamide = 5-[(5-phospho-1-deoxy-D-ribulos-1-ylimino)methylamino]-1-(5-phospho-beta-D-ribosyl)imidazole-4-carboxamide. It participates in amino-acid biosynthesis; L-histidine biosynthesis; L-histidine from 5-phospho-alpha-D-ribose 1-diphosphate: step 4/9. In Salinispora arenicola (strain CNS-205), this protein is 1-(5-phosphoribosyl)-5-[(5-phosphoribosylamino)methylideneamino] imidazole-4-carboxamide isomerase.